The chain runs to 570 residues: Probable metalloreductase AIM14 (570 aa).

7 helical membrane passes run 21 to 41 (IKYG…LALL), 70 to 90 (AIHL…HYSL), 101 to 118 (LGRL…LTLR), 142 to 162 (IITV…AIDD), 177 to 197 (FVGF…IGPM), 204 to 224 (LFYI…PIHS), and 230 to 250 (FPFL…RIVF). The Ferric oxidoreductase domain maps to 101–219 (LGRLSYALIP…NLVNVAFILL (119 aa)). Residues 250 to 388 (FAKSLMILNK…GGSGISFALP (139 aa)) form the FAD-binding FR-type domain. Residues 481–505 (SNFNSENADSNDNTPETSHSPTKEN) show a composition bias toward polar residues. Residues 481-507 (SNFNSENADSNDNTPETSHSPTKENGS) are disordered.

Belongs to the ferric reductase (FRE) family. AIM14 subfamily. As to quaternary structure, interacts with ribosomes.

Its subcellular location is the membrane. Its function is as follows. Probable cell surface metalloreductase. May be involved in iron or copper homeostasis. The chain is Probable metalloreductase AIM14 (AIM14) from Saccharomyces cerevisiae (strain YJM789) (Baker's yeast).